The sequence spans 371 residues: T-cell acute lymphocytic leukemia protein 1 (371 aa).

Residues 1–71 (MMEKRQPELC…DVPLQNSSNG (71 aa)) are disordered. Positions 34–57 (GCKEDEESKREEGDKEGGGRFKGD) are enriched in basic and acidic residues. One can recognise a bHLH domain in the interval 204–256 (VRRIFTNSRERWRQQNVNGAFAELRKLIPTHPPDKKLSKNEILRLAMKYISFL). The disordered stretch occupies residues 263-371 (QDGGRNVSST…GRPLDGSSRR (109 aa)). Positions 293-305 (HQDRVVGLARDDI) are enriched in basic and acidic residues. A compositionally biased stretch (acidic residues) spans 321–335 (GDADGSPESFMEDQD).

Expressed in the main hemopoietic organs in adults, namely the kidney and the spleen. Also expressed in the liver, brain, gill and gonads.

The protein resides in the nucleus. Its function is as follows. Transcription factor that plays a pivotal role in hemopoietic and endothelial development. The protein is T-cell acute lymphocytic leukemia protein 1 of Takifugu rubripes (Japanese pufferfish).